Reading from the N-terminus, the 287-residue chain is Ribosomal RNA-processing protein 8 (287 aa).

The tract at residues Met1–Ser62 is disordered. A compositionally biased stretch (basic residues) spans Ser9–Lys21. A compositionally biased stretch (basic and acidic residues) spans Gln35 to Asn46. Residues His107, Gly142, Asp160, Asp172, Met173, and Cys189 each coordinate S-adenosyl-L-methionine.

This sequence belongs to the methyltransferase superfamily. RRP8 family.

It localises to the nucleus. The protein localises to the nucleolus. In terms of biological role, probable methyltransferase required to silence rDNA. This Arabidopsis thaliana (Mouse-ear cress) protein is Ribosomal RNA-processing protein 8.